A 475-amino-acid chain; its full sequence is Splicing factor U2AF 65 kDa subunit (475 aa).

Positions Met-1–Lys-90 are disordered. Residue Ser-2 is modified to N-acetylserine. Ser-2 carries the phosphoserine modification. The tract at residues Ser-2–Asp-93 is required for interaction with PRPF19. Residues Phe-7–Asn-22 are compositionally biased toward basic and acidic residues. Lys-15 carries the post-translational modification 5-hydroxylysine; by JMJD6; alternate. Lys-15 is covalently cross-linked (Glycyl lysine isopeptide (Lys-Gly) (interchain with G-Cter in SUMO2); alternate). The segment at Glu-17 to Arg-47 is necessary and sufficient to stimulate pre-mRNAs 3'-end cleavage in a CFIm complex-dependent manner. Positions Arg-23 to Arg-46 are enriched in basic residues. The segment covering Arg-47–Arg-56 has biased composition (basic and acidic residues). Lys-70 is covalently cross-linked (Glycyl lysine isopeptide (Lys-Gly) (interchain with G-Cter in SUMO2); alternate). N6-acetyllysine; alternate is present on Lys-70. Residue Ser-79 is modified to Phosphoserine. Over residues Ser-79–Arg-89 the composition is skewed to basic residues. 3 consecutive RRM domains span residues Arg-149 to Asp-231, His-259 to Val-337, and Leu-385 to Pro-466. Lys-276 carries the post-translational modification 5-hydroxylysine; by JMJD6. Position 294 is a phosphoserine (Ser-294).

The protein belongs to the splicing factor SR family. As to quaternary structure, interacts with U2AF1L4. Heterodimer with U2AF1. Binds unphosphorylated SF1. Interacts with SCAF11 and SNW1. Interacts with ZRSR2/U2AF1-RS2. Interacts with RBM17. Interacts with PRPF19; the interaction is direct. Interacts with POLR2A (via the C-terminal domain); Interacts with PRPF19; the interaction is direct. Interacts with POLR2A (via the C-terminal domain); recruits PRPF19 and the Prp19 complex to the pre-mRNA. Interacts with KHDC4 (Isoform 2). Interacts with ZRSR2. Interacts with the SF3B complex composed of SF3B1, SF3B2, SF3B3, SF3B4, SF3B5, SF3B6 and PHF5A. Interacts (via N-terminus) with CPSF7 (via C-terminus); this interaction stimulates pre-mRNA 3'-end processing by promoting the recruitment of the CFIm complex to cleavage and polyadenylation signals. Interacts with ARGLU1; interaction may be involved in ARGLU1-mediated modulation of alternative splicing. Post-translationally, lysyl-hydroxylation at Lys-15 and Lys-276 affects the mRNA splicing activity of the protein, leading to regulate some, but not all, alternative splicing events.

It localises to the nucleus. Plays a role in pre-mRNA splicing and 3'-end processing. By recruiting PRPF19 and the PRP19C/Prp19 complex/NTC/Nineteen complex to the RNA polymerase II C-terminal domain (CTD), and thereby pre-mRNA, may couple transcription to splicing. Required for the export of mRNA out of the nucleus, even if the mRNA is encoded by an intron-less gene. Positively regulates pre-mRNA 3'-end processing by recruiting the CFIm complex to cleavage and polyadenylation signals. The protein is Splicing factor U2AF 65 kDa subunit (U2af2) of Mus musculus (Mouse).